Consider the following 275-residue polypeptide: Elongation factor Ts (275 aa).

Positions 76 to 79 (TDFV) are involved in Mg(2+) ion dislocation from EF-Tu.

This sequence belongs to the EF-Ts family.

It localises to the cytoplasm. Associates with the EF-Tu.GDP complex and induces the exchange of GDP to GTP. It remains bound to the aminoacyl-tRNA.EF-Tu.GTP complex up to the GTP hydrolysis stage on the ribosome. This Corynebacterium diphtheriae (strain ATCC 700971 / NCTC 13129 / Biotype gravis) protein is Elongation factor Ts.